The chain runs to 234 residues: Endonuclease V (234 aa).

Residues Asp-42 and Asp-108 each coordinate Mg(2+).

The protein belongs to the endonuclease V family. The cofactor is Mg(2+).

The protein resides in the cytoplasm. The enzyme catalyses Endonucleolytic cleavage at apurinic or apyrimidinic sites to products with a 5'-phosphate.. Its function is as follows. DNA repair enzyme involved in the repair of deaminated bases. Selectively cleaves double-stranded DNA at the second phosphodiester bond 3' to a deoxyinosine leaving behind the intact lesion on the nicked DNA. In Geotalea uraniireducens (strain Rf4) (Geobacter uraniireducens), this protein is Endonuclease V.